The chain runs to 403 residues: Tyrosine--tRNA ligase (403 aa).

The 'HIGH' region motif lies at 42 to 51; sequence PTAPDLHLGH. A 'KMSKS' region motif is present at residues 226–230; the sequence is KMSKS. Lys229 is a binding site for ATP. An S4 RNA-binding domain is found at 339–400; sequence LRLAGLLTAA…GKRNFARVLL (62 aa).

This sequence belongs to the class-I aminoacyl-tRNA synthetase family. TyrS type 2 subfamily. As to quaternary structure, homodimer.

The protein localises to the cytoplasm. It catalyses the reaction tRNA(Tyr) + L-tyrosine + ATP = L-tyrosyl-tRNA(Tyr) + AMP + diphosphate + H(+). In terms of biological role, catalyzes the attachment of tyrosine to tRNA(Tyr) in a two-step reaction: tyrosine is first activated by ATP to form Tyr-AMP and then transferred to the acceptor end of tRNA(Tyr). The chain is Tyrosine--tRNA ligase from Xanthomonas euvesicatoria pv. vesicatoria (strain 85-10) (Xanthomonas campestris pv. vesicatoria).